An 81-amino-acid chain; its full sequence is Probable antitoxin MazE2 (81 aa).

Forms a complex with cognate toxin MazF2.

Its function is as follows. Antitoxin component of a type II toxin-antitoxin (TA) system. The polypeptide is Probable antitoxin MazE2 (mazE2) (Mycobacterium tuberculosis (strain ATCC 25618 / H37Rv)).